A 101-amino-acid polypeptide reads, in one-letter code: Ubiquitin-related modifier 1 (101 aa).

Gly-101 is subject to 1-thioglycine. Gly-101 participates in a covalent cross-link: Glycyl lysine isopeptide (Gly-Lys) (interchain with K-? in acceptor proteins).

It belongs to the URM1 family. In terms of processing, C-terminal thiocarboxylation occurs in 2 steps, it is first acyl-adenylated (-COAMP) via the hesA/moeB/thiF part of the MOCS3 homolog, then thiocarboxylated (-COSH) via the rhodanese domain of the MOCS3 homolog.

The protein resides in the cytoplasm. Its pathway is tRNA modification; 5-methoxycarbonylmethyl-2-thiouridine-tRNA biosynthesis. Its function is as follows. Acts as a sulfur carrier required for 2-thiolation of mcm(5)S(2)U at tRNA wobble positions of cytosolic tRNA(Lys), tRNA(Glu) and tRNA(Gln). Serves as sulfur donor in tRNA 2-thiolation reaction by being thiocarboxylated (-COSH) at its C-terminus by MOCS3. The sulfur is then transferred to tRNA to form 2-thiolation of mcm(5)S(2)U. Also acts as a ubiquitin-like protein (UBL) that is covalently conjugated via an isopeptide bond to lysine residues of target proteins. The thiocarboxylated form serves as substrate for conjugation and oxidative stress specifically induces the formation of UBL-protein conjugates. The sequence is that of Ubiquitin-related modifier 1 from Gallus gallus (Chicken).